We begin with the raw amino-acid sequence, 145 residues long: Flagellar assembly factor FliW (145 aa).

It belongs to the FliW family. As to quaternary structure, interacts with translational regulator CsrA and flagellin(s).

The protein localises to the cytoplasm. In terms of biological role, acts as an anti-CsrA protein, binds CsrA and prevents it from repressing translation of its target genes, one of which is flagellin. Binds to flagellin and participates in the assembly of the flagellum. The chain is Flagellar assembly factor FliW from Anoxybacillus flavithermus (strain DSM 21510 / WK1).